The chain runs to 271 residues: Norsolorinic acid ketoreductase (271 aa).

The disordered stretch occupies residues 1–22; it reads MNGSLSQHDQERLSTPYRDGPP. I36, N112, Y185, K189, V216, and T218 together coordinate NADP(+). Catalysis depends on Y185, which acts as the Proton donor. Catalysis depends on K189, which acts as the Lowers pKa of active site Tyr.

Belongs to the short-chain dehydrogenases/reductases (SDR) family.

Its subcellular location is the cytoplasm. It localises to the cytosol. It is found in the vacuole. It catalyses the reaction (1'S)-averantin + NADP(+) = norsolorinic acid + NADPH + H(+). It functions in the pathway mycotoxin biosynthesis; aflatoxin biosynthesis. Its function is as follows. Norsolorinic acid ketoreductase; part of the gene cluster that mediates the biosynthesis of aflatoxins, a group of polyketide-derived furanocoumarins, and part of the most toxic and carcinogenic compounds among the known mycotoxins. The four major aflatoxins produced by A.parasiticus are aflatoxin B1 (AFB1), aflatoxin B2 (AFB2), aflatoxin G1 (AFG1) and aflatoxin G2 (AFG2). Within the aflatoxin pathway, the norsolorinic acid ketoreductase aflD performs the second step by catalyzing the dehydration of norsolorinic acid (NOR) to form (1'S)-averantin (AVN). The biosynthesis of aflatoxins begins with the norsolorinic acid synthase aflC that combines a hexanoyl starter unit produced by the fatty acid synthase aflA/aflB and 7 malonyl-CoA extender units to synthesize the precursor NOR. The second step is the conversion of NOR to averantin and requires the norsolorinic acid ketoreductase aflD, which catalyzes the dehydration of norsolorinic acid to form (1'S)-averantin. The norsolorinic acid reductases aflE and aflF may also play a role in the conversion of NOR to AVN. The cytochrome P450 monooxygenase aflG then catalyzes the hydroxylation of AVN to 5'hydroxyaverantin (HAVN). The next step is performed by the 5'-hydroxyaverantin dehydrogenase aflH that transforms HAVN to 5'-oxoaverantin (OAVN) which is further converted to averufin (AVF) by aflK that plays a dual role in the pathway, as a 5'-oxoaverantin cyclase that mediates conversion of 5'-oxoaverantin, as well as a versicolorin B synthase in a later step in the pathway. The averufin oxidase aflI catalyzes the conversion of AVF to versiconal hemiacetal acetate (VHA). VHA is then the substrate for the versiconal hemiacetal acetate esterase aflJ to yield versiconal (VAL). Versicolorin B synthase aflK then converts VAL to versicolorin B (VERB) by closing the bisfuran ring of aflatoxin which is required for DNA-binding, thus giving to aflatoxin its activity as a mutagen. Then, the activity of the versicolorin B desaturase aflL leads to versicolorin A (VERA). A branch point starts from VERB since it can also be converted to dihydrodemethylsterigmatocystin (DMDHST), probably also by aflL, VERA being a precursor for aflatoxins B1 and G1, and DMDHST for aflatoxins B2 and G2. Next, the versicolorin reductase aflM and the cytochrome P450 monooxygenase aflN are involved in conversion of VERA to demethylsterigmatocystin (DMST). AflX and aflY seem also involved in this step, through probable aflX-mediated epoxide ring-opening step following versicolorin A oxidation and aflY-mediated Baeyer-Villiger oxidation required for the formation of the xanthone ring. The methyltransferase aflO then leads to the modification of DMST to sterigmatocystin (ST), and of DMDHST to dihydrosterigmatocystin (DHST). Both ST and DHST are then substrates of the O-methyltransferase aflP to yield O-methylsterigmatocystin (OMST) and dihydro-O-methylsterigmatocystin (DHOMST), respectively. Finally OMST is converted to aflatoxins B1 and G1, and DHOMST to aflatoxins B2 and G2, via the action of several enzymes including O-methylsterigmatocystin oxidoreductase aflQ, the cytochrome P450 monooxygenase aflU, but also the NADH-dependent flavin oxidoreductase nadA which is specifically required for the synthesis of AFG1. The sequence is that of Norsolorinic acid ketoreductase from Aspergillus parasiticus (strain ATCC 56775 / NRRL 5862 / SRRC 143 / SU-1).